The chain runs to 181 residues: MSISESYAKEIKTAFRQFTDFPIEGEQFEDFLPIIGNPTLFQKLVHTFKTHLEEKFGKEKIDFIAGIEARGLLFGPSLALALGVGFVPIRRVGKLPGECASITFTKLDHEEIFEMQVEAIPFDSNVVVVDDVLATGGTAYAAGDLIRQVGAHILEYDFVLVLDSLHGEEKLSAPIFSILHS.

S2 carries the N-acetylserine modification.

The protein belongs to the purine/pyrimidine phosphoribosyltransferase family.

It is found in the cytoplasm. The catalysed reaction is AMP + diphosphate = 5-phospho-alpha-D-ribose 1-diphosphate + adenine. Its pathway is purine metabolism; AMP biosynthesis via salvage pathway; AMP from adenine: step 1/1. Functionally, catalyzes a salvage reaction resulting in the formation of AMP, that is energically less costly than de novo synthesis. May lack catalytic activity. The polypeptide is Adenine phosphoribosyltransferase 2 (APT2) (Saccharomyces cerevisiae (strain ATCC 204508 / S288c) (Baker's yeast)).